The primary structure comprises 365 residues: Mitochondrial protein C2orf69 homolog (365 aa).

The transit peptide at Met-1 to Gly-24 directs the protein to the mitochondrion. The segment at Ser-28 to Ser-64 is disordered. The segment covering Arg-53–Ser-64 has biased composition (polar residues).

Belongs to the C2orf69 family.

The protein localises to the mitochondrion matrix. Its function is as follows. May play a role in the respiratory chain. The polypeptide is Mitochondrial protein C2orf69 homolog (Mus musculus (Mouse)).